The chain runs to 85 residues: MKVTLIAILTCAAVLVLHTTAAEELEAESQLMEVGMPDTELAAVDEERLFECSVSCEIEKEGNKDCKKKKCKGGWKCKSNICVKV.

The first 22 residues, 1-22, serve as a signal peptide directing secretion; it reads MKVTLIAILTCAAVLVLHTTAA. Positions 23-48 are excised as a propeptide; that stretch reads EELEAESQLMEVGMPDTELAAVDEER. 3 disulfide bridges follow: C52-C66, C56-C77, and C71-C82.

The protein belongs to the neurotoxin 12 (Hwtx-2) family. 02 (Hwtx-2) subfamily. In terms of tissue distribution, expressed by the venom gland.

It localises to the secreted. Functionally, postsynaptic neurotoxin. In Cyriopagopus hainanus (Chinese bird spider), this protein is U4-theraphotoxin-Hhn1s.